Reading from the N-terminus, the 1781-residue chain is BCL-6 corepressor-like protein 1 (1781 aa).

Disordered stretches follow at residues 64 to 136 and 337 to 362; these read AVGS…SHSR and ASTPPAAPAPPSVPMPTPTPSSGPPS. Composition is skewed to polar residues over residues 66–82 and 127–136; these read GSGSNARGTNPDGNTTE and PDSTEASHSR. Serine 490 is subject to Phosphoserine. The span at 521–531 shows a compositional bias: low complexity; sequence SCTSPSSSTNS. Disordered regions lie at residues 521–545, 561–616, 733–777, 869–895, and 933–960; these read SCTSPSSSTNSQPAPDGVPGPLADT, LLPA…EMPL, NRDP…STVK, PLGSSETVHGLPEGQPRPGGPFAPEQD, and QPSSGDMGVNQGSEESESHLCSDSTPKM. Residues 581–594 are compositionally biased toward polar residues; that stretch reads TDQQTEGTSVTFSP. Serine 593 and serine 607 each carry phosphoserine. Residue lysine 741 forms a Glycyl lysine isopeptide (Lys-Gly) (interchain with G-Cter in SUMO2) linkage. Residue serine 1024 is modified to Phosphoserine. A Glycyl lysine isopeptide (Lys-Gly) (interchain with G-Cter in SUMO2) cross-link involves residue lysine 1087. A disordered region spans residues 1100–1484; sequence WQPDEETESL…PTARQIPPEA (385 aa). Residues 1116–1127 show a composition bias toward basic and acidic residues; sequence CNKEKEIEEEPR. Phosphoserine is present on serine 1162. The segment covering 1176-1185 has biased composition (basic residues); it reads VRGKHKHRKP. Residues 1195–1213 show a composition bias toward basic and acidic residues; that stretch reads KRTDGHEEGSLEKKAKNSF. Polar residues predominate over residues 1222–1234; sequence STRTRSQSGSICS. Basic and acidic residues-rich tracts occupy residues 1271–1284 and 1297–1307; these read TQRDTQYRSHHAQD and RAREMPWRTEA. Residues 1314–1324 show a composition bias toward acidic residues; sequence TNEEEEDDEEE. Positions 1328-1339 are enriched in basic residues; sequence KRKKRRRQKSRK. Residues 1350 to 1362 show a composition bias toward basic and acidic residues; it reads EEQRRKGRADSKA. 2 stretches are compositionally biased toward polar residues: residues 1381–1394 and 1437–1449; these read LLLSSKAQGISDSP and RWSQQKTRSSKSP. 3 ANK repeats span residues 1493–1523, 1527–1556, and 1560–1589; these read AGETLLQRAARLGYKDVVLYCLQKHSEDVNH, AGYTALHEACSRGWTDILNILLQHGANVNC, and DGTRPVHDAVVNDNLETIWLLLSYGADPTL. Residues 1664 to 1781 are PCGF Ub-like fold domain (PUFD); required for the interaction with the KDM2B-SKP1 heterodimeric complex; the sequence is DDFMFELSDK…SEVEYQSWSS (118 aa).

Belongs to the BCOR family. Interacts with PCGF1, forming heterodimers. The PCGF1-BCORL1 heterodimeric complex interacts with the KDM2B-SKP1 heterodimeric complex to form a homotetrameric polycomb repression complex 1 (PRC1.1). Interacts with SKP1. Interacts with CTBP1, HDAC4, HDAC5 and HDAC7. As to expression, highly expressed in lung and testis.

It localises to the nucleus. Transcriptional corepressor. May specifically inhibit gene expression when recruited to promoter regions by sequence specific DNA-binding proteins such as BCL6. This repression may be mediated at least in part by histone deacetylase activities which can associate with this corepressor. This is BCL-6 corepressor-like protein 1 (Bcorl1) from Mus musculus (Mouse).